A 156-amino-acid polypeptide reads, in one-letter code: Small ribosomal subunit protein uS7 (156 aa).

It belongs to the universal ribosomal protein uS7 family. As to quaternary structure, part of the 30S ribosomal subunit. Contacts proteins S9 and S11.

Functionally, one of the primary rRNA binding proteins, it binds directly to 16S rRNA where it nucleates assembly of the head domain of the 30S subunit. Is located at the subunit interface close to the decoding center, probably blocks exit of the E-site tRNA. The sequence is that of Small ribosomal subunit protein uS7 from Aromatoleum aromaticum (strain DSM 19018 / LMG 30748 / EbN1) (Azoarcus sp. (strain EbN1)).